A 213-amino-acid chain; its full sequence is Thiopurine S-methyltransferase (213 aa).

Residues tryptophan 10, leucine 45, glutamate 66, and arginine 121 each coordinate S-adenosyl-L-methionine.

Belongs to the class I-like SAM-binding methyltransferase superfamily. TPMT family.

The protein resides in the cytoplasm. The catalysed reaction is S-adenosyl-L-methionine + a thiopurine = S-adenosyl-L-homocysteine + a thiopurine S-methylether.. This is Thiopurine S-methyltransferase from Aliivibrio salmonicida (strain LFI1238) (Vibrio salmonicida (strain LFI1238)).